The primary structure comprises 444 residues: Glutamyl-tRNA reductase (444 aa).

Substrate-binding positions include 49–52 (TCNR), Ser109, 114–116 (ETQ), and Gln120. The Nucleophile role is filled by Cys50. Residue 189–194 (GAGKMG) participates in NADP(+) binding.

Belongs to the glutamyl-tRNA reductase family. As to quaternary structure, homodimer.

It carries out the reaction (S)-4-amino-5-oxopentanoate + tRNA(Glu) + NADP(+) = L-glutamyl-tRNA(Glu) + NADPH + H(+). The protein operates within porphyrin-containing compound metabolism; protoporphyrin-IX biosynthesis; 5-aminolevulinate from L-glutamyl-tRNA(Glu): step 1/2. In terms of biological role, catalyzes the NADPH-dependent reduction of glutamyl-tRNA(Glu) to glutamate 1-semialdehyde (GSA). In Bacillus cereus (strain AH187), this protein is Glutamyl-tRNA reductase.